Here is a 98-residue protein sequence, read N- to C-terminus: NADH-ubiquinone oxidoreductase chain 4L (98 aa).

3 consecutive transmembrane segments (helical) span residues 1–21, 26–46, and 61–81; these read MPSI…GTLI, LMSS…LTSL, and IILL…LVMV.

Belongs to the complex I subunit 4L family. In terms of assembly, core subunit of respiratory chain NADH dehydrogenase (Complex I) which is composed of 45 different subunits.

It localises to the mitochondrion inner membrane. It catalyses the reaction a ubiquinone + NADH + 5 H(+)(in) = a ubiquinol + NAD(+) + 4 H(+)(out). In terms of biological role, core subunit of the mitochondrial membrane respiratory chain NADH dehydrogenase (Complex I) which catalyzes electron transfer from NADH through the respiratory chain, using ubiquinone as an electron acceptor. Part of the enzyme membrane arm which is embedded in the lipid bilayer and involved in proton translocation. The chain is NADH-ubiquinone oxidoreductase chain 4L (MT-ND4L) from Otolemur crassicaudatus (Brown greater galago).